Here is a 130-residue protein sequence, read N- to C-terminus: Small ribosomal subunit protein uS8 (130 aa).

Belongs to the universal ribosomal protein uS8 family. In terms of assembly, part of the 30S ribosomal subunit. Contacts proteins S5 and S12.

In terms of biological role, one of the primary rRNA binding proteins, it binds directly to 16S rRNA central domain where it helps coordinate assembly of the platform of the 30S subunit. The protein is Small ribosomal subunit protein uS8 of Vibrio campbellii (strain ATCC BAA-1116).